The sequence spans 434 residues: Trigger factor (434 aa).

Positions 160–245 (GDKVKMNFVG…LTEVLAANLP (86 aa)) constitute a PPIase FKBP-type domain.

The protein belongs to the FKBP-type PPIase family. Tig subfamily.

The protein localises to the cytoplasm. The enzyme catalyses [protein]-peptidylproline (omega=180) = [protein]-peptidylproline (omega=0). Involved in protein export. Acts as a chaperone by maintaining the newly synthesized protein in an open conformation. Functions as a peptidyl-prolyl cis-trans isomerase. The sequence is that of Trigger factor from Shewanella sp. (strain ANA-3).